We begin with the raw amino-acid sequence, 340 residues long: uncharacterized protein (340 aa).

The signal sequence occupies residues 1–23 (MQKKVLSLVLVLAVLESIVPVSA).

This is an uncharacterized protein from Archaeoglobus fulgidus (strain ATCC 49558 / DSM 4304 / JCM 9628 / NBRC 100126 / VC-16).